A 423-amino-acid chain; its full sequence is Serine--tRNA ligase (423 aa).

T231–E233 serves as a coordination point for L-serine. R262 to E264 contacts ATP. E285 is a binding site for L-serine. E349–S352 serves as a coordination point for ATP. S385 serves as a coordination point for L-serine.

Belongs to the class-II aminoacyl-tRNA synthetase family. Type-1 seryl-tRNA synthetase subfamily. As to quaternary structure, homodimer. The tRNA molecule binds across the dimer.

Its subcellular location is the cytoplasm. It carries out the reaction tRNA(Ser) + L-serine + ATP = L-seryl-tRNA(Ser) + AMP + diphosphate + H(+). It catalyses the reaction tRNA(Sec) + L-serine + ATP = L-seryl-tRNA(Sec) + AMP + diphosphate + H(+). It participates in aminoacyl-tRNA biosynthesis; selenocysteinyl-tRNA(Sec) biosynthesis; L-seryl-tRNA(Sec) from L-serine and tRNA(Sec): step 1/1. Catalyzes the attachment of serine to tRNA(Ser). Is also able to aminoacylate tRNA(Sec) with serine, to form the misacylated tRNA L-seryl-tRNA(Sec), which will be further converted into selenocysteinyl-tRNA(Sec). The sequence is that of Serine--tRNA ligase from Coxiella burnetii (strain RSA 331 / Henzerling II).